The primary structure comprises 661 residues: Hemocyanin C chain (661 aa).

C3 and C557 are disulfide-bonded. Cu cation-binding residues include H200, H204, H230, H350, H354, and H390. Residue N476 is glycosylated (N-linked (GlcNAc...) asparagine).

The protein belongs to the tyrosinase family. Hemocyanin subfamily. As to quaternary structure, hexamer of a number of different chains, of which A, B, and C have been identified. In terms of tissue distribution, hemolymph.

The protein resides in the secreted. The protein localises to the extracellular space. Its function is as follows. Hemocyanins are copper-containing oxygen carriers occurring freely dissolved in the hemolymph of many mollusks and arthropods. This is Hemocyanin C chain from Panulirus interruptus (California spiny lobster).